A 214-amino-acid chain; its full sequence is Large ribosomal subunit protein uL3 (214 aa).

The tract at residues 119–159 (GVKRHGFAGGPKTHGQSDRHRAPGSIGPTTDPGRVHKGKRM) is disordered.

This sequence belongs to the universal ribosomal protein uL3 family. As to quaternary structure, part of the 50S ribosomal subunit. Forms a cluster with proteins L14 and L19.

Functionally, one of the primary rRNA binding proteins, it binds directly near the 3'-end of the 23S rRNA, where it nucleates assembly of the 50S subunit. The sequence is that of Large ribosomal subunit protein uL3 from Thermomicrobium roseum (strain ATCC 27502 / DSM 5159 / P-2).